The primary structure comprises 358 residues: Pre-mRNA-splicing factor spp2 (358 aa).

2 disordered regions span residues 1 to 250 and 298 to 358; these read MTDQ…RAVP and AWNQ…RGDR. Residues 24-40 show a composition bias toward basic residues; that stretch reads KTKKPSRPTHTRRHHAR. Composition is skewed to basic and acidic residues over residues 80-137 and 145-160; these read LENR…DASR and RSRD…KDLQ. Residues 174–185 are compositionally biased toward polar residues; it reads NPKSTTTATSSF. Composition is skewed to basic and acidic residues over residues 233–246 and 309–358; these read SSHD…HSDY and GDSR…RGDR.

Belongs to the SPP2 family. Associated with the spliceosome.

The protein localises to the nucleus. Functionally, involved in spliceosome maturation and the first step of pre-mRNA splicing. The protein is Pre-mRNA-splicing factor spp2 (msp-40) of Neurospora crassa (strain ATCC 24698 / 74-OR23-1A / CBS 708.71 / DSM 1257 / FGSC 987).